We begin with the raw amino-acid sequence, 269 residues long: Putative ABC transporter ATP-binding protein PF0528 (269 aa).

The ABC transporter domain occupies 6-237 (IVVENLYSSY…EILKRNNLDV (232 aa)). 39-46 (GPNGAGKS) contacts ATP.

This sequence belongs to the ABC transporter superfamily.

Its subcellular location is the cell membrane. Its function is as follows. Probably part of an ABC transporter complex. Responsible for energy coupling to the transport system. In Pyrococcus furiosus (strain ATCC 43587 / DSM 3638 / JCM 8422 / Vc1), this protein is Putative ABC transporter ATP-binding protein PF0528.